The sequence spans 760 residues: Formin-like protein 8 (760 aa).

The N-terminal stretch at 1–29 (MAAMFNHPWPNLTLIYFFFIVVLPFQSLS) is a signal peptide. Residues 52-63 (PLLPPSSNPSPP) show a composition bias toward pro residues. Residues 52 to 71 (PLLPPSSNPSPPSNNSSSSD) are disordered. Residues 78 to 98 (AVLITAASTLLVAGVFFFCLQ) form a helical membrane-spanning segment. Positions 204 to 313 (TEIPLLRGRS…VKLKPLHWDK (110 aa)) are disordered. Positions 253–274 (TPSPPPPIKKGSSPSPPPPPPV) are enriched in pro residues. The region spanning 296 to 732 (SGGETSKQVK…GSPISPSSQR (437 aa)) is the FH2 domain.

Belongs to the formin-like family. Class-I subfamily. In terms of assembly, interacts with profilin.

It localises to the cell membrane. Might be involved in the organization and polarity of the actin cytoskeleton. Interacts with the barbed end of actin filaments and nucleates actin-filament polymerization in vitro. In Arabidopsis thaliana (Mouse-ear cress), this protein is Formin-like protein 8 (FH8).